The sequence spans 248 residues: 1-(5-phosphoribosyl)-5-[(5-phosphoribosylamino)methylideneamino] imidazole-4-carboxamide isomerase (248 aa).

D8 (proton acceptor) is an active-site residue. The Proton donor role is filled by D129.

This sequence belongs to the HisA/HisF family.

Its subcellular location is the cytoplasm. The enzyme catalyses 1-(5-phospho-beta-D-ribosyl)-5-[(5-phospho-beta-D-ribosylamino)methylideneamino]imidazole-4-carboxamide = 5-[(5-phospho-1-deoxy-D-ribulos-1-ylimino)methylamino]-1-(5-phospho-beta-D-ribosyl)imidazole-4-carboxamide. The protein operates within amino-acid biosynthesis; L-histidine biosynthesis; L-histidine from 5-phospho-alpha-D-ribose 1-diphosphate: step 4/9. In Rhizobium etli (strain ATCC 51251 / DSM 11541 / JCM 21823 / NBRC 15573 / CFN 42), this protein is 1-(5-phosphoribosyl)-5-[(5-phosphoribosylamino)methylideneamino] imidazole-4-carboxamide isomerase.